A 217-amino-acid polypeptide reads, in one-letter code: Ependymin (217 aa).

The N-terminal stretch at 1 to 20 (MHTVKLLCVVFSCLCAIGWA) is a signal peptide. Residues asparagine 73 and asparagine 96 are each glycosylated (N-linked (GlcNAc...) asparagine).

Belongs to the ependymin family. As to quaternary structure, forms disulfide-linked dimers. In terms of processing, binds calcium through the terminal sialic acids. EPDs are synthesized in the meninx and secreted in the cerebrospinal fluid.

The protein resides in the secreted. May play a role in neural plasticity. May be involved during axon regeneration. In Danio rerio (Zebrafish), this protein is Ependymin (epd).